A 424-amino-acid chain; its full sequence is Glutamyl-tRNA reductase (424 aa).

Residues 49–52 (TCNR), serine 109, 114–116 (EDQ), and glutamine 120 contribute to the substrate site. Cysteine 50 functions as the Nucleophile in the catalytic mechanism. Position 189-194 (189-194 (GFGKMS)) interacts with NADP(+).

The protein belongs to the glutamyl-tRNA reductase family. As to quaternary structure, homodimer.

The catalysed reaction is (S)-4-amino-5-oxopentanoate + tRNA(Glu) + NADP(+) = L-glutamyl-tRNA(Glu) + NADPH + H(+). It participates in porphyrin-containing compound metabolism; protoporphyrin-IX biosynthesis; 5-aminolevulinate from L-glutamyl-tRNA(Glu): step 1/2. Its function is as follows. Catalyzes the NADPH-dependent reduction of glutamyl-tRNA(Glu) to glutamate 1-semialdehyde (GSA). This Alkaliphilus metalliredigens (strain QYMF) protein is Glutamyl-tRNA reductase.